A 258-amino-acid chain; its full sequence is Probable succinate transporter subunit YjjP (258 aa).

The next 5 membrane-spanning stretches (helical) occupy residues 116–137 (YPRW…KLNN), 143–160 (AVVT…RQLL), 171–191 (FCIT…LPAF), 197–217 (IAMA…NAVA), and 231–251 (WAIA…AMTM).

The protein belongs to the ThrE exporter (TC 2.A.79) family. As to quaternary structure, the transporter is composed of YjjB and YjjP.

Its subcellular location is the cell inner membrane. Involved in succinate export with YjjB. Both proteins are required for export. Participates in succinate export, but also in the export of other dicarboxylates, such as fumarate and malate. Contributes to succinate production under both aerobic and anaerobic conditions, and increases fumarate and malate production during anaerobic succinate production. This Klebsiella aerogenes (strain ATCC 13048 / DSM 30053 / CCUG 1429 / JCM 1235 / KCTC 2190 / NBRC 13534 / NCIMB 10102 / NCTC 10006 / CDC 819-56) (Enterobacter aerogenes) protein is Probable succinate transporter subunit YjjP.